We begin with the raw amino-acid sequence, 392 residues long: Chalcone synthase B (392 aa).

The active site involves C167.

This sequence belongs to the thiolase-like superfamily. Chalcone/stilbene synthases family. In terms of tissue distribution, expressed at low level in seedlings after illumination with UV light. No expression in flowers or tissue culture.

The catalysed reaction is (E)-4-coumaroyl-CoA + 3 malonyl-CoA + 3 H(+) = 2',4,4',6'-tetrahydroxychalcone + 3 CO2 + 4 CoA. It participates in secondary metabolite biosynthesis; flavonoid biosynthesis. Its function is as follows. The primary product of this enzyme is 4,2',4',6'-tetrahydroxychalcone (also termed naringenin-chalcone or chalcone) which can under specific conditions spontaneously isomerize into naringenin. The protein is Chalcone synthase B (CHSB) of Petunia hybrida (Petunia).